A 333-amino-acid chain; its full sequence is 4-hydroxyproline epimerase (333 aa).

C90 functions as the Proton acceptor in the catalytic mechanism. Substrate contacts are provided by residues 91 to 92 and D249; that span reads GH. The Proton donor role is filled by C253. 254–255 provides a ligand contact to substrate; that stretch reads GT.

This sequence belongs to the proline racemase family. In terms of assembly, homodimer.

The enzyme catalyses trans-4-hydroxy-L-proline = cis-4-hydroxy-D-proline. Its function is as follows. Allows intracellular utilization of 4-hydroxyproline, one of the major constituents of host collagen, by converting 4-hydroxy-L-proline to 4-hydroxy-D-proline, which can be further metabolized by intracellular 4-hydroxy-D-proline oxidases. Strong B-cell mitogen. Plays an important role in the regulation of intra- and extracellular amino acid pools, allowing the bacterium to profit from host precursors and enzymatic pathways. The sequence is that of 4-hydroxyproline epimerase from Brucella canis (strain ATCC 23365 / NCTC 10854 / RM-666).